Consider the following 112-residue polypeptide: Large ribosomal subunit protein uL22 (112 aa).

Belongs to the universal ribosomal protein uL22 family. Part of the 50S ribosomal subunit.

In terms of biological role, this protein binds specifically to 23S rRNA; its binding is stimulated by other ribosomal proteins, e.g. L4, L17, and L20. It is important during the early stages of 50S assembly. It makes multiple contacts with different domains of the 23S rRNA in the assembled 50S subunit and ribosome. The globular domain of the protein is located near the polypeptide exit tunnel on the outside of the subunit, while an extended beta-hairpin is found that lines the wall of the exit tunnel in the center of the 70S ribosome. The sequence is that of Large ribosomal subunit protein uL22 from Caldanaerobacter subterraneus subsp. tengcongensis (strain DSM 15242 / JCM 11007 / NBRC 100824 / MB4) (Thermoanaerobacter tengcongensis).